A 448-amino-acid polypeptide reads, in one-letter code: GTPase Der (448 aa).

EngA-type G domains are found at residues 2–171 (FTVV…PDTQ) and 181–364 (PKIA…EEYS). Residues 8–15 (GRPNVGKS), 58–62 (DTGGF), 123–126 (NKID), 187–194 (GRPNVGKS), 234–238 (DTAGI), and 305–308 (NKWD) each bind GTP. One can recognise a KH-like domain in the interval 365–448 (KRVSTSELNR…PINIKIKQRK (84 aa)).

Belongs to the TRAFAC class TrmE-Era-EngA-EngB-Septin-like GTPase superfamily. EngA (Der) GTPase family. In terms of assembly, associates with the 50S ribosomal subunit.

Functionally, GTPase that plays an essential role in the late steps of ribosome biogenesis. The protein is GTPase Der of Thermodesulfovibrio yellowstonii (strain ATCC 51303 / DSM 11347 / YP87).